The primary structure comprises 260 residues: MAKWGQGDPRWIVEEREDGTNVNNWHWTERDATSWSKGRLRELLVGITVENEAGRCEISELKQVEGEASCSSRKGKLIFFYEWNIKLGWKGIIRESGAKHKGLIEIPSLSEENEVDDTEVNVSKKKGDGDILKDLMKTAGTAKVREALGDYLKALKTEFTMGMILPTKAMAAQELTVERKLSENALQIQASSRVALGVRIPTVALHMTELFDTAIEQLYRIFTVKDLVQKFSKSPAVLEAEKGGKFQMLMETSPVNIQNC.

Belongs to the AHA1 family.

In terms of biological role, co-chaperone that stimulates HSP90 ATPase activity. This Bos taurus (Bovine) protein is Activator of 90 kDa heat shock protein ATPase homolog 2 (AHSA2).